The chain runs to 1372 residues: DNA-directed RNA polymerase subunit beta (1372 aa).

Belongs to the RNA polymerase beta chain family. In terms of assembly, the RNAP catalytic core consists of 2 alpha, 1 beta, 1 beta' and 1 omega subunit. When a sigma factor is associated with the core the holoenzyme is formed, which can initiate transcription.

It carries out the reaction RNA(n) + a ribonucleoside 5'-triphosphate = RNA(n+1) + diphosphate. Its function is as follows. DNA-dependent RNA polymerase catalyzes the transcription of DNA into RNA using the four ribonucleoside triphosphates as substrates. The chain is DNA-directed RNA polymerase subunit beta from Nitratidesulfovibrio vulgaris (strain ATCC 29579 / DSM 644 / CCUG 34227 / NCIMB 8303 / VKM B-1760 / Hildenborough) (Desulfovibrio vulgaris).